Reading from the N-terminus, the 91-residue chain is Probable Fe(2+)-trafficking protein (91 aa).

This sequence belongs to the Fe(2+)-trafficking protein family.

Its function is as follows. Could be a mediator in iron transactions between iron acquisition and iron-requiring processes, such as synthesis and/or repair of Fe-S clusters in biosynthetic enzymes. In Paraburkholderia phymatum (strain DSM 17167 / CIP 108236 / LMG 21445 / STM815) (Burkholderia phymatum), this protein is Probable Fe(2+)-trafficking protein.